A 276-amino-acid polypeptide reads, in one-letter code: ATP synthase subunit a (276 aa).

Helical transmembrane passes span 49–69 (KPML…FAAA), 109–129 (YLFT…IPFI), 137–157 (SGMV…AGIS), 173–193 (GIRG…NILV), 203–223 (FANM…GEYI), 232–252 (APVG…EMLI), and 253–273 (QFLQ…GAVA).

The protein belongs to the ATPase A chain family. In terms of assembly, F-type ATPases have 2 components, CF(1) - the catalytic core - and CF(0) - the membrane proton channel. CF(1) has five subunits: alpha(3), beta(3), gamma(1), delta(1), epsilon(1). CF(0) has three main subunits: a(1), b(2) and c(9-12). The alpha and beta chains form an alternating ring which encloses part of the gamma chain. CF(1) is attached to CF(0) by a central stalk formed by the gamma and epsilon chains, while a peripheral stalk is formed by the delta and b chains.

The protein localises to the cell membrane. Functionally, key component of the proton channel; it plays a direct role in the translocation of protons across the membrane. The protein is ATP synthase subunit a of Nocardioides sp. (strain ATCC BAA-499 / JS614).